The following is a 647-amino-acid chain: DNA mismatch repair protein MutL (647 aa).

This sequence belongs to the DNA mismatch repair MutL/HexB family.

In terms of biological role, this protein is involved in the repair of mismatches in DNA. It is required for dam-dependent methyl-directed DNA mismatch repair. May act as a 'molecular matchmaker', a protein that promotes the formation of a stable complex between two or more DNA-binding proteins in an ATP-dependent manner without itself being part of a final effector complex. The polypeptide is DNA mismatch repair protein MutL (Bacillus cereus (strain ATCC 10987 / NRS 248)).